The chain runs to 170 residues: Photosystem II extrinsic protein V (170 aa).

A signal peptide spans methionine 1–alanine 34. Cysteine 70, cysteine 73, histidine 74, and histidine 125 together coordinate heme c.

This sequence belongs to the cytochrome c family. PsbV subfamily. As to quaternary structure, PSII is composed of 1 copy each of membrane proteins PsbA, PsbB, PsbC, PsbD, PsbE, PsbF, PsbH, PsbI, PsbJ, PsbK, PsbL, PsbM, PsbT, PsbX, PsbY, PsbZ, Psb30/Ycf12, peripheral proteins PsbO, CyanoQ (PsbQ), PsbU, PsbV and a large number of cofactors. It forms dimeric complexes. It depends on heme c as a cofactor.

It is found in the cellular thylakoid membrane. In terms of biological role, one of the extrinsic, lumenal subunits of photosystem II (PSII). PSII is a light-driven water plastoquinone oxidoreductase, using light energy to abstract electrons from H(2)O, generating a proton gradient subsequently used for ATP formation. The extrinsic proteins stabilize the structure of photosystem II oxygen-evolving complex (OEC), the ion environment of oxygen evolution and protect the OEC against heat-induced inactivation. Low-potential cytochrome c that plays a role in the OEC of PSII. This chain is Photosystem II extrinsic protein V, found in Picosynechococcus sp. (strain ATCC 27264 / PCC 7002 / PR-6) (Agmenellum quadruplicatum).